The chain runs to 125 residues: MARIASVNIPDSKRLVVSLTYIYGLGPTMAAEICNKAKISKDKKVKELTDQELISLRNIIESEYKVEGDLRREVTLNIKKKKDIRCYQGLRHIRKLPVRGQNTHSNARTRKGKAIAIAGKKKTVK.

The protein belongs to the universal ribosomal protein uS13 family. In terms of assembly, part of the 30S ribosomal subunit. Forms a loose heterodimer with protein S19. Forms two bridges to the 50S subunit in the 70S ribosome.

In terms of biological role, located at the top of the head of the 30S subunit, it contacts several helices of the 16S rRNA. In the 70S ribosome it contacts the 23S rRNA (bridge B1a) and protein L5 of the 50S subunit (bridge B1b), connecting the 2 subunits; these bridges are implicated in subunit movement. Contacts the tRNAs in the A and P-sites. The polypeptide is Small ribosomal subunit protein uS13 (Rickettsia massiliae (strain Mtu5)).